Consider the following 699-residue polypeptide: Glycine--tRNA ligase beta subunit (699 aa).

Belongs to the class-II aminoacyl-tRNA synthetase family. As to quaternary structure, tetramer of two alpha and two beta subunits.

It is found in the cytoplasm. It catalyses the reaction tRNA(Gly) + glycine + ATP = glycyl-tRNA(Gly) + AMP + diphosphate. In Bradyrhizobium diazoefficiens (strain JCM 10833 / BCRC 13528 / IAM 13628 / NBRC 14792 / USDA 110), this protein is Glycine--tRNA ligase beta subunit.